A 194-amino-acid polypeptide reads, in one-letter code: uncharacterized protein (194 aa).

In terms of domain architecture, SIS spans 34 to 192 (VMQCLLGGNK…CELVDQTLFP (159 aa)).

Belongs to the SIS family. DiaA subfamily.

This is an uncharacterized protein from Haemophilus influenzae (strain ATCC 51907 / DSM 11121 / KW20 / Rd).